The primary structure comprises 118 residues: Small ribosomal subunit protein uS17 (118 aa).

This sequence belongs to the universal ribosomal protein uS17 family. As to quaternary structure, part of the 30S ribosomal subunit.

Functionally, one of the primary rRNA binding proteins, it binds specifically to the 5'-end of 16S ribosomal RNA. The sequence is that of Small ribosomal subunit protein uS17 from Methanopyrus kandleri (strain AV19 / DSM 6324 / JCM 9639 / NBRC 100938).